Here is a 162-residue protein sequence, read N- to C-terminus: ATP synthase subunit b (162 aa).

The helical transmembrane segment at 6–25 (TLFTLVTFLVLMLAVGKVAW) threads the bilayer.

The protein belongs to the ATPase B chain family. In terms of assembly, F-type ATPases have 2 components, F(1) - the catalytic core - and F(0) - the membrane proton channel. F(1) has five subunits: alpha(3), beta(3), gamma(1), delta(1), epsilon(1). F(0) has three main subunits: a(1), b(2) and c(10-14). The alpha and beta chains form an alternating ring which encloses part of the gamma chain. F(1) is attached to F(0) by a central stalk formed by the gamma and epsilon chains, while a peripheral stalk is formed by the delta and b chains.

The protein localises to the cell membrane. In terms of biological role, f(1)F(0) ATP synthase produces ATP from ADP in the presence of a proton or sodium gradient. F-type ATPases consist of two structural domains, F(1) containing the extramembraneous catalytic core and F(0) containing the membrane proton channel, linked together by a central stalk and a peripheral stalk. During catalysis, ATP synthesis in the catalytic domain of F(1) is coupled via a rotary mechanism of the central stalk subunits to proton translocation. Its function is as follows. Component of the F(0) channel, it forms part of the peripheral stalk, linking F(1) to F(0). The polypeptide is ATP synthase subunit b (Lacticaseibacillus paracasei (strain ATCC 334 / BCRC 17002 / CCUG 31169 / CIP 107868 / KCTC 3260 / NRRL B-441) (Lactobacillus paracasei)).